We begin with the raw amino-acid sequence, 1158 residues long: MTLHAYLGRAGTGKSTKMLTEIKQKMKADPLGDPIILIAPTQSTFQLEQAFVNDPELNGSLRTEVLHFERLSHRIFQEVGSYSEQKLSKAATEMMIYNIVQEQQKYLKLYQSQAKYYGFSEKLTEQIQDFKKYAVTPEHLESFIADKNMQTRTKNKLEDIALIYREFEQRIQNEFITGEDALQYFIDCMPKSEWLKRADIYIDGFHNFSTIEYLIIKGLIKYAKSVTIILTTDGNHDQFSLFRKPSEVLRHIEEISNELNISIERQYFNQLYRFNNQDLKHLEQEFDALQINRVACQGHINILESATMREEINEIARRIIVDIRDKQLRYQDIAILYRDESYAYLFDSILPLYNIPYNIDTKRSMTHHPVMEMIRSLIEVIQSNWQINPMLRLLKTDVLTTSYLKSAYLVDLLENFVLERGIYGKRWLDDELFNVEHFSKMGRKAHKLTEDERNTFEQVVKLKKDVIDKILHFEKQMSQAATVKDFATAFYESMEYFELPNQLMTERDELDLNGNHEKAEEIDQIWNGLIQILDDLVLVFGDEPMSMERFLEVFDIGLEQLEFVMIPQTLDQVSIGTMDLAKVDNKQHVYLVGMNDGTMPQPVTASSLITDEEKKYFEQQANVELSPTSDILQMDEAFVCYVAMTRAKGNVTFSYSLMGSSGDDKEISPFLNQIQSLFNQLEITNIPQYHEVNPLSLMQHAKQTKITLFEALRAWLDDEIVADSWLDAYQVIRDSDHLSQGLDYLMSALTFDNETVKLGETLSKDLYGKEINASVSRFEGYQQCPFKHYASHGLKLNERTKYELQNFDLGDIFHSVLKYISERINGDFKQLDLKKIRQLTNEALEEILPKVQFNLLNSSAYYRYLSRRIGAIVETTLSALKYQGTYSKFMPKHFETSFRRKPRTNDELIAQTLTTTQGIPINIRGQIDRIDTYTKNDTSFVNIIDYKSSEGSATLDLTKVYYGMQMQMMTYMDIVLQNKQRLGLTDIVKPGGLLYFHVHEPRIKFKSWADIDEDKLEQDLIKKFKLSGLVNADQTVIDALDIRLEPKFTSDIVPVGLNKDGSLSKRGSQVADEATIYKFIQHNKENFIETASNIMDGHTEVAPLKYKQKLPCAFCSYQSVCHVDGMIDSKRYRTVDETINPIEAIQNININDEFGGEQ.

Residues 1-275 form the UvrD-like helicase ATP-binding domain; sequence MTLHAYLGRA…QYFNQLYRFN (275 aa). 8-15 contacts ATP; it reads GRAGTGKS. Residues 269-583 form the UvrD-like helicase C-terminal domain; sequence NQLYRFNNQD…SIGTMDLAKV (315 aa). Positions 784, 1112, 1115, and 1121 each coordinate [4Fe-4S] cluster.

It belongs to the helicase family. AddB/RexB type 1 subfamily. Heterodimer of AddA and AddB. Mg(2+) serves as cofactor. The cofactor is [4Fe-4S] cluster.

Functionally, the heterodimer acts as both an ATP-dependent DNA helicase and an ATP-dependent, dual-direction single-stranded exonuclease. Recognizes the chi site generating a DNA molecule suitable for the initiation of homologous recombination. The AddB subunit has 5' -&gt; 3' nuclease activity but not helicase activity. The chain is ATP-dependent helicase/deoxyribonuclease subunit B from Staphylococcus aureus (strain MRSA252).